Reading from the N-terminus, the 246-residue chain is MKVVTPKPFTFKGGDKAVLLLHGFTGNTADVRMLGRYLNERGYTCHAPQYEGHGVPPEELVHTGPEDWWKNVMDGYEYLKSEGYESIAACGLSLGGVFSLKLGYTVPIKGIVPMCAPMHIKSEEVMYQGVLSYARNYKKFEGKSPEQIEEEMKEFEKTPMNTLKALQDLIADVRNNVDMIYSPTFVVQARHDHMINTESANIIYNEVETDDKQLKWYEESGHVITLDKERDLVHQDVYEFLEKLDW.

Catalysis depends on Ser93, which acts as the Nucleophile. Catalysis depends on charge relay system residues Asp192 and His222.

The protein belongs to the lipase/esterase LIP3/BchO family. Homodimer.

It catalyses the reaction a carboxylic ester + H2O = an alcohol + a carboxylate + H(+). Involved in the detoxification of xenobiotics. Shows maximal activity with C6 substrates, with gradually decreasing activity from C8 to C12 substrates. No activity for higher chain length substrates acids rather than long-chain ones. This is Carboxylesterase (est) from Bacillus subtilis (strain 168).